The sequence spans 440 residues: C4-dicarboxylate transport protein (440 aa).

9 helical membrane passes run Val-15 to Ala-35, Leu-46 to Met-66, Tyr-78 to Val-98, Ala-146 to Leu-166, Ile-190 to Ile-210, Leu-224 to Cys-244, Val-291 to Leu-311, Ile-332 to Gly-352, and Ile-354 to Ile-374. The disordered stretch occupies residues Gly-419–Arg-440.

Belongs to the dicarboxylate/amino acid:cation symporter (DAACS) (TC 2.A.23) family.

Its subcellular location is the cell inner membrane. Its function is as follows. Responsible for the transport of dicarboxylates such as succinate, fumarate, and malate from the periplasm across the membrane. This chain is C4-dicarboxylate transport protein, found in Pseudomonas entomophila (strain L48).